The following is a 1586-amino-acid chain: COP1-interactive protein 1 (1586 aa).

Positions 10–84 (LKSFFEPHFD…RQYDDLTGEI (75 aa)) constitute an NAB domain. The tract at residues 88–119 (VNGKGESSSSSSSDSDSDHSSKRKVKRNGNGK) is disordered. Coiled-coil stretches lie at residues 128-411 (TGAL…LKES), 437-1196 (ASEL…LKEE), 1225-1336 (LETL…TEAT), and 1372-1406 (MESL…SNQK). LRR repeat units follow at residues 173–187 (SEEI…TEKL), 188–210 (EDEK…VAGK), 216–239 (NQKL…GIKR), 261–285 (TSNL…MNSA), and 287–309 (EENK…GQTT). Over residues 249 to 262 (DWKTTSDQLKDETS) the composition is skewed to basic and acidic residues. Residues 249 to 286 (DWKTTSDQLKDETSNLKQQLEASEQRVSELTSGMNSAE) are disordered. The segment at 325 to 353 (KEKESEHSSLVELHKTHERESSSQVKELE) is disordered. LRR repeat units lie at residues 384-410 (IAEL…QLKE), 437-461 (ASEL…LKAA), 473-498 (VETM…KLKD), 560-586 (IAEL…QLKE), 613-637 (VSEL…LKDA), 649-674 (LEIM…ELKD), 768-792 (LSEL…LNAA), 824-850 (LAES…AHKR), 856-880 (VKEL…LNSS), 902-929 (ESTI…LFSL), 944-968 (LRGL…LKAA), 990-1014 (QIMV…ESKL), 1077-1101 (ISEL…LEDN), 1120-1144 (RAEL…SEEA), 1195-1220 (EEII…KIKG), 1247-1272 (VQMH…NLKN), 1372-1396 (MESL…ISNI), 1398-1417 (VKLR…LTEK), 1426-1448 (AKHL…TYRG), and 1450-1474 (IKEI…LTEK). The disordered stretch occupies residues 430–456 (QRDSSTRASELEAQLESSKQQVSDLSA). Residues 444–455 (LESSKQQVSDLS) show a composition bias toward polar residues. The segment at 965–985 (LKAAEEESRTMSTKISETSDE) is disordered. Residues 1496 to 1530 (VIERNHEKEKMNKEIEKKDEEIKKLGGKVREDEKE) adopt a coiled-coil conformation.

Interacts with COP1 coiled-coil region. In terms of tissue distribution, mainly expressed in photosynthetic and vascular tissues. Accumulates in both dark-grown and light-grown seedlings roots and shoots, leaves and flowers (at protein level).

It is found in the cell membrane. The protein localises to the cytoplasm. It localises to the cytoskeleton. In terms of biological role, positive regulator of abscisic acid (ABA)-mediated signaling pathways involved in abiotic stress responses (e.g. osmotic stress) and leading to various plant adaptation (e.g. stomata closure). This is COP1-interactive protein 1 from Arabidopsis thaliana (Mouse-ear cress).